The chain runs to 2346 residues: Highly reducing polyketide synthase claI (2346 aa).

The region spanning 10–412 (TPAIAVVGMA…GTNCHLIVED (403 aa)) is the Ketosynthase family 3 (KS3) domain. Catalysis depends on for beta-ketoacyl synthase activity residues cysteine 183, histidine 295, and histidine 335. The tract at residues 530–842 (IFTGQGSQWP…EYFSALKRGE (313 aa)) is malonyl-CoA:ACP transacylase (MAT) domain. Serine 622 acts as the For malonyltransferase activity in catalysis. An N-terminal hotdog fold region spans residues 912 to 1048 (HDLLGSKILG…GLIRTSEEDS (137 aa)). The dehydratase (DH) domain stretch occupies residues 912 to 1213 (HDLLGSKILG…INGLRFSSVD (302 aa)). One can recognise a PKS/mFAS DH domain in the interval 912-1218 (HDLLGSKILG…FSSVDLGSVQ (307 aa)). The Proton acceptor; for dehydratase activity role is filled by histidine 944. The C-terminal hotdog fold stretch occupies residues 1060–1218 (IHATPAQVWY…FSSVDLGSVQ (159 aa)). The Proton donor; for dehydratase activity role is filled by aspartate 1124. Residues 1633-1946 (GSLEALQWTQ…SARHIGKILI (314 aa)) are enoyl reductase (ER) domain. A ketoreductase (KR) domain region spans residues 1972–2151 (TYLIVGGLRG…HSLDLGVVDA (180 aa)). The 79-residue stretch at 2258 to 2336 (SQLVEKAVTL…ALAEKMVSKV (79 aa)) folds into the Carrier domain. Position 2296 is an O-(pantetheine 4'-phosphoryl)serine (serine 2296).

Pantetheine 4'-phosphate serves as cofactor.

The protein operates within secondary metabolite biosynthesis. Highly reducing polyketide synthase; part of the cla gene cluster that produces clavatol and ortho-quinone methide. The clavatol biosynthesis cluster cla and the terrestric acid cluster tra are both involved in the production of peniphenones and penilactones. The non-reducing PKS claF is responsible for the formation of clavatol from successive condensations of 3 malonyl-CoA units, presumably with a simple acetyl-CoA starter unit, and 2 methylation steps. The esterase claE probably collaborates with claF by catalyzing the hydrolysis of ACP-bound acyl intermediates to free the ACP from stalled intermediates. The clavatol oxidase claD then converts clavatol to hydroxyclavatol. Spontaneous dehydration of hydroxyclavatol leads to the accumulation of the highly active ortho-quinone methide. On the other hand, the PKS-NRPS hybrid traA is involved in the formation of crustosic acid, with the help of traB and traD. The polyketide synthase module (PKS) of traA is responsible for the synthesis of the polyketide backbone via the condensation of an acetyl-CoA starter unit with 3 malonyl-CoA units. The downstream nonribosomal peptide synthetase (NRPS) module then amidates the carboxyl end of the polyketide with L-malic acid. Because traA lacks a designated enoylreductase (ER) domain, the required activity is provided the enoyl reductase traG. Crustosic acid undergoes decarboxylation and isomerization to the terrestric acid, catalyzed by the 2-oxoglutarate-dependent dioxygenase traH. Both acids are further converted to the 2 gamma-butyrolactones (R)-5-methyltetronic acid and (S)-5-carboxylmethyltetronic acid, with involvement of the cytochrome P450 monooxygenase claJ. Spontaneous addition of the methide to these gamma-butyrolactones leads to peniphenone D and penilactone D, which undergo again stereospecific attacking by methide to give penilactones A and B. The function of the highly reducing polyketide synthase claI has not been investigated yet. The polypeptide is Highly reducing polyketide synthase claI (Penicillium crustosum (Blue mold fungus)).